A 169-amino-acid polypeptide reads, in one-letter code: Heat shock protein beta-7 (169 aa).

Positions 1 to 37 (MSHRTSSAFRAERSFRSSSSSSSSSSSSASRALPAQD) are disordered. Residues 1–70 (MSHRTSSAFR…PLAFPARPGG (70 aa)) form a required for localization to SC35 splicing speckles region. The segment covering 16 to 32 (RSSSSSSSSSSSSASRA) has biased composition (low complexity). The sHSP domain maps to 61–169 (PLAFPARPGG…QQTFRTEIKI (109 aa)).

This sequence belongs to the small heat shock protein (HSP20) family. In terms of assembly, interacts with C-terminal domain of actin-binding protein 280. Found in both cardiac and slow skeletal (soleus) muscle.

It is found in the cytoplasm. The protein localises to the nucleus. Its subcellular location is the cajal body. The sequence is that of Heat shock protein beta-7 (Hspb7) from Mus musculus (Mouse).